We begin with the raw amino-acid sequence, 195 residues long: Interferon omega-1 (195 aa).

Residues 1–21 constitute a signal peptide (or 23 in some molecules); it reads MALLFPLLAALVMTSYSPVGS. 2 disulfides stabilise this stretch: Cys24-Cys122 and Cys52-Cys162. The N-linked (GlcNAc...) asparagine glycan is linked to Asn101.

The protein belongs to the alpha/beta interferon family.

It is found in the secreted. This is Interferon omega-1 (IFNW1) from Homo sapiens (Human).